The chain runs to 2944 residues: Collagen alpha-1(VII) chain (2944 aa).

Residues 1–16 (MTLRLLVAALCAGILA) form the signal peptide. The tract at residues 17-1253 (EAPRVRAQHR…PEPCPVYCPK (1237 aa)) is nonhelical region (NC1). One can recognise a VWFA 1 domain in the interval 38 to 211 (DIVFLLDGSS…SILRTLLPLV (174 aa)). Fibronectin type-III domains lie at 234 to 329 (APRD…TALE), 330 to 416 (GPEL…TDAS), 417 to 507 (VEQT…PELP), 510 to 597 (PVTD…EPET), 600 to 687 (AVPG…DPLG), 688 to 775 (PVRT…APEP), 778 to 866 (RVSR…PPEA), 869 to 957 (ALGT…SPRV), and 958 to 1051 (PSIE…CPRG). N-linked (GlcNAc...) asparagine glycosylation is present at N337. The segment at 632–651 (STGSGPESSQTLPPDSTATD) is disordered. A glycan (N-linked (GlcNAc...) asparagine) is linked at N786. One can recognise a VWFA 2 domain in the interval 1054–1229 (DVVFLPHATQ…PSLDQAVSGL (176 aa)). An N-linked (GlcNAc...) asparagine glycan is attached at N1109. Short sequence motifs (cell attachment site) lie at residues 1170–1172 (RGD) and 1334–1336 (RGD). Disordered stretches follow at residues 1239-1941 (TTQP…SVPN), 1963-2782 (WDES…EKGE), and 2837-2872 (SHAE…PWDS). The interval 1254-1477 (GQKGEPGEMG…GPRGPPGAIG (224 aa)) is interrupted collagenous region. Residues 1254-2784 (GQKGEPGEMG…GPRGEKGEAA (1531 aa)) form a triple-helical region region. Positions 1336-1346 (DPGERGPRGPK) are enriched in basic and acidic residues. Over residues 1355–1365 (VIGGEGPGLPG) the composition is skewed to gly residues. Over residues 1399-1408 (KGDKGDRGER) the composition is skewed to basic and acidic residues. The segment covering 1429-1440 (PGSPGPQGPVGP) has biased composition (pro residues). Residues 1574–1583 (RGPPGLVLPG) are compositionally biased toward low complexity. 3 stretches are compositionally biased toward basic and acidic residues: residues 1630-1642 (RGRD…KGDE), 1669-1683 (VGEK…EDGR), and 1715-1733 (AREK…RGPK). Positions 1786–1802 (KPGAAGPSGPNGAAGKA) are enriched in low complexity. The span at 1852-1877 (EDGRKGEKGDSGASGREGRDGPKGER) shows a compositional bias: basic and acidic residues. Over residues 1886–1897 (QGPPGLPGPVGP) the composition is skewed to pro residues. A compositionally biased stretch (gly residues) spans 1898–1911 (PGQGFPGVPGGTGP). Residues 1974-1984 (PERRRGPKGDS) are compositionally biased toward basic and acidic residues. Positions 2008–2010 (RGD) match the Cell attachment site motif. 4-hydroxyproline is present on residues P2036 and P2039. The span at 2046-2055 (GRAGGVGEAG) shows a compositional bias: gly residues. The segment covering 2056–2074 (RPGERGERGEKGERGEQGR) has biased composition (basic and acidic residues). Over residues 2078 to 2092 (PGLPGTPGPPGPPGP) the composition is skewed to pro residues. P2084, P2087, and P2090 each carry 4-hydroxyproline. Positions 2127–2143 (PKGDRGVPGIKGDRGEP) are enriched in basic and acidic residues. 4 positions are modified to 4-hydroxyproline: P2167, P2176, P2185, and P2188. Low complexity-rich tracts occupy residues 2191–2206 (PGLA…SGLK) and 2235–2250 (SGLV…PGQV). Basic and acidic residues predominate over residues 2328–2346 (AKGDRGLPGPRGEKGEAGR). The span at 2387–2406 (VKGDLGLPGLPGAPGVVGFP) shows a compositional bias: low complexity. A compositionally biased stretch (pro residues) spans 2438–2448 (PLGPPGPPGSV). 2 stretches are compositionally biased toward basic and acidic residues: residues 2471 to 2486 (RGER…DGRP) and 2534 to 2570 (AKGD…EPGD). A Cell attachment site motif is present at residues 2553-2555 (RGD). A compositionally biased stretch (low complexity) spans 2573–2601 (SAGLPGLRGLLGPQGQPGAAGIPGDPGSP). K2625 and K2631 each carry 5-hydroxylysine; alternate. Residues K2625 and K2631 are each glycosylated (O-linked (Gal...) hydroxylysine; alternate). P2664, P2667, and P2673 each carry 4-hydroxyproline. The segment covering 2704 to 2713 (GTPGIGGFPG) has biased composition (gly residues). The segment covering 2749-2762 (GERVVGAPGVPGAP) has biased composition (low complexity). Residues 2785–2944 (LTEDDIRGFV…QSQGTGTAQD (160 aa)) are nonhelical region (NC2). The segment covering 2837–2847 (SHAEEEERVPP) has biased composition (basic and acidic residues). Over residues 2848-2872 (EDDEYSEYSEYSVEEYQDPEAPWDS) the composition is skewed to acidic residues. Positions 2872-2944 (SDDPCSLPLD…QSQGTGTAQD (73 aa)) constitute a BPTI/Kunitz inhibitor domain. Intrachain disulfides connect C2876-C2929, C2885-C2912, and C2904-C2925.

Homotrimer. Interacts with MIA3/TANGO1; facilitating its loading into transport carriers and subsequent secretion. Prolines at the third position of the tripeptide repeating unit (G-X-Y) are hydroxylated in some or all of the chains.

It localises to the secreted. It is found in the extracellular space. The protein localises to the extracellular matrix. The protein resides in the basement membrane. Stratified squamous epithelial basement membrane protein that forms anchoring fibrils which may contribute to epithelial basement membrane organization and adherence by interacting with extracellular matrix (ECM) proteins such as type IV collagen. In Homo sapiens (Human), this protein is Collagen alpha-1(VII) chain (COL7A1).